Here is a 1470-residue protein sequence, read N- to C-terminus: Membrane-associated guanylate kinase, WW and PDZ domain-containing protein 3 (1470 aa).

Residues 18-108 (CAVSWAGPPG…PIRLKTVKPG (91 aa)) enclose the PDZ 1 domain. The interval 18–108 (CAVSWAGPPG…PIRLKTVKPG (91 aa)) is interaction with ADRB1 and TGFA. The Guanylate kinase-like domain occupies 116-290 (RHYLSLQFQK…RSMDFRNYMM (175 aa)). ATP is bound at residue 123–130 (FQKGSIDH). The tract at residues 184–266 (TYDGNFYGTP…ETREMHSESS (83 aa)) is disordered. The span at 193–204 (PKPPAEPSPFQP) shows a compositional bias: pro residues. S236 is subject to Phosphoserine. Acidic residues predominate over residues 238–247 (LPEEEEDEDK). WW domains follow at residues 296–329 (EPLPKNWEMAYTDTGTIYFIDHNTKTTTWLDPRL) and 342–375 (GELPYGWEKIEDPQYGTYYVDHLNQKTQFENPVE). In terms of domain architecture, PDZ 2 spans 413–495 (RASLKKSTMG…NQYVNLTLCR (83 aa)). Positions 413–495 (RASLKKSTMG…NQYVNLTLCR (83 aa)) are interaction with PTEN. The interval 550 to 575 (LLSSDRLNGPSDSNEQRASLASSGSS) is disordered. Over residues 559–575 (PSDSNEQRASLASSGSS) the composition is skewed to polar residues. Residues 581–657 (TIPLVKGPKG…GADVPLLILR (77 aa)) form the PDZ 3 domain. Residue S598 is modified to Phosphoserine. The interval 665–700 (KTAKMKTDTKETSGSLETINEPTPQPMPFPPSIIRS) is disordered. Positions 676-686 (TSGSLETINEP) are enriched in polar residues. Residue S702 is modified to Phosphoserine. In terms of domain architecture, PDZ 4 spans 729-811 (DVFLRKQESG…NGHVLLTVRR (83 aa)). Positions 729–811 (DVFLRKQESG…NGHVLLTVRR (83 aa)) are interaction with ADGRB1. The segment at 818-847 (KQPEDESPQAFSQSGSPRLNRTELPTRSAP) is disordered. Over residues 826–847 (QAFSQSGSPRLNRTELPTRSAP) the composition is skewed to polar residues. S833 and S916 each carry phosphoserine. The PDZ 5 domain maps to 852–939 (DVILQRKENE…TVTLTVVAEE (88 aa)). Positions 852–939 (DVILQRKENE…TVTLTVVAEE (88 aa)) are interaction with LPAR2 and GRIN2B. The disordered stretch occupies residues 939–976 (EEHHGPPSGTNSARQSPALQHRPMGQAQATHIPGDRTA). Over residues 946–956 (SGTNSARQSPA) the composition is skewed to polar residues. One can recognise a PDZ 6 domain in the interval 1022–1104 (PVELERGPRG…KVLLLLRPGT (83 aa)). Disordered stretches follow at residues 1124–1146 (IYDEQPPPLPSSHSAATFEESHV) and 1167–1470 (DTVQ…DKQL). Residues 1175 to 1191 (TLNGSQPEMKYQSIQKN) are compositionally biased toward polar residues. Basic and acidic residues-rich tracts occupy residues 1193-1209 (SKKDPSRSHGHGDKNLL) and 1230-1263 (RHSEEHLEKIPRPLRSDPKGKSRDRSLSPRKGEN). The segment covering 1285–1304 (SSSPRKQQKIGGNSLSNTEG) has biased composition (polar residues). S1321 carries the phosphoserine modification. 4 stretches are compositionally biased toward basic and acidic residues: residues 1326 to 1340 (PEGKEKSGVSRKDLK), 1350 to 1361 (RSPEKRSSKVDE), 1377 to 1397 (VSEKEKGRKPGTGERSRDKTG), and 1422 to 1431 (EVTDRGKERA).

The protein belongs to the MAGUK family. Interacts with ADRB1, ADGRB1, LPAR2/EDG4, FZD4, FZD7, GRIN2B, TGFA and VANGL2. Interacts with PTEN. Interacts with ADRB1, PTPRB and unidentified tyrosine phosphorylated proteins. Interacts with DLL1. Interacts with PRRG4 (via cytoplasmic domain).

The protein localises to the cell membrane. It is found in the cell junction. Its subcellular location is the tight junction. The protein resides in the nucleus. Acts as a scaffolding protein at cell-cell junctions, thereby regulating various cellular and signaling processes. Cooperates with PTEN to modulate the kinase activity of AKT1. Its interaction with PTPRB and tyrosine phosphorylated proteins suggests that it may link receptor tyrosine phosphatase with its substrates at the plasma membrane. In polarized epithelial cells, involved in efficient trafficking of TGFA to the cell surface. Regulates the ability of LPAR2 to activate ERK and RhoA pathways. Regulates the JNK signaling cascade via its interaction with FZD4 and VANGL2. In Rattus norvegicus (Rat), this protein is Membrane-associated guanylate kinase, WW and PDZ domain-containing protein 3 (Magi3).